A 69-amino-acid chain; its full sequence is Ferredoxin-1 (69 aa).

Cysteine 12, cysteine 18, and cysteine 57 together coordinate [3Fe-4S] cluster.

[3Fe-4S] cluster is required as a cofactor.

Functionally, electron transport protein for the cytochrome P-450-SU1 system. This Streptomyces griseolus protein is Ferredoxin-1 (suaB).